The following is a 378-amino-acid chain: Putative glutamate--cysteine ligase 2-1 (378 aa).

This sequence belongs to the glutamate--cysteine ligase type 2 family. YbdK subfamily.

The enzyme catalyses L-cysteine + L-glutamate + ATP = gamma-L-glutamyl-L-cysteine + ADP + phosphate + H(+). In terms of biological role, ATP-dependent carboxylate-amine ligase which exhibits weak glutamate--cysteine ligase activity. This is Putative glutamate--cysteine ligase 2-1 from Corynebacterium efficiens (strain DSM 44549 / YS-314 / AJ 12310 / JCM 11189 / NBRC 100395).